A 126-amino-acid chain; its full sequence is Chemocyanin (126 aa).

The first 30 residues, 1 to 30 (MAQGSGSAERALVLGVVLVFLVFNCEVAES), serve as a signal peptide directing secretion. A Phytocyanin domain is found at 31–126 (VVYTVGDGGG…GGLKIAVTAA (96 aa)). Residues H69, C109, and H114 each contribute to the Cu cation site. An intrachain disulfide couples C82 to C115.

Strongly expressed in stigma and style and to a lesser extent in leaves, ovary and petals. Not detected in pollen tubes, mature anthers or roots.

In terms of biological role, diffusible chemotropic factor that induces pollen tube chemotropism. In Lilium longiflorum (Trumpet lily), this protein is Chemocyanin.